We begin with the raw amino-acid sequence, 533 residues long: Beta-1,4 N-acetylgalactosaminyltransferase 1 (533 aa).

Residues 1-7 (MWLGRRA) are Cytoplasmic-facing. A helical; Signal-anchor for type II membrane protein membrane pass occupies residues 8-25 (LCALVLLLACASLGLLYA). Over 26-533 (STRDAPGLRL…KHRLQCMTSQ (508 aa)) the chain is Lumenal. Asn79, Asn179, and Asn274 each carry an N-linked (GlcNAc...) asparagine glycan. Cysteines 429 and 476 form a disulfide.

It belongs to the glycosyltransferase 2 family. In terms of assembly, homodimer; disulfide-linked.

It is found in the golgi apparatus membrane. The enzyme catalyses a ganglioside GM3 (d18:1(4E)) + UDP-N-acetyl-alpha-D-galactosamine = a ganglioside GM2 (d18:1(4E)) + UDP + H(+). It catalyses the reaction a ganglioside GM3 + UDP-N-acetyl-alpha-D-galactosamine = a ganglioside GM2 + UDP + H(+). The catalysed reaction is a ganglioside GD3 + UDP-N-acetyl-alpha-D-galactosamine = a ganglioside GD2 + UDP + H(+). It carries out the reaction a ganglioside GD3 (d18:1(4E)) + UDP-N-acetyl-alpha-D-galactosamine = a ganglioside GD2 (d18:1(4E)) + UDP + H(+). The enzyme catalyses a beta-D-Gal-(1-&gt;4)-beta-D-Glc-(1&lt;-&gt;1)-Cer(d18:1(4E)) + UDP-N-acetyl-alpha-D-galactosamine = a ganglioside GA2 (d18:1(4E)) + UDP + H(+). It catalyses the reaction a ganglioside GD1a + UDP-N-acetyl-alpha-D-galactosamine = a ganglioside GalNAc-GD1a + UDP + H(+). The catalysed reaction is a ganglioside GT3 (d18:1(4E)) + UDP-N-acetyl-alpha-D-galactosamine = a ganglioside GT2 (d18:1(4E)) + UDP + H(+). It carries out the reaction a beta-D-galactosyl-(1-&gt;4)-beta-D-glucosyl-(1&lt;-&gt;1)-ceramide + UDP-N-acetyl-alpha-D-galactosamine = a ganglioside GA2 + UDP + H(+). The enzyme catalyses a neolactoside IV(3)-alpha-NeuGc-nLc4Cer + UDP-N-acetyl-alpha-D-galactosamine = a neolactoside IV(4)-beta-GalNAc-IV(3)-alpha-NeuGc-nLc4Cer + UDP + H(+). It functions in the pathway sphingolipid metabolism. Involved in the biosynthesis of gangliosides GM2, GD2, GT2 and GA2 from GM3, GD3, GT3 and GA3, respectively. In Homo sapiens (Human), this protein is Beta-1,4 N-acetylgalactosaminyltransferase 1.